A 295-amino-acid polypeptide reads, in one-letter code: N-acetylmuramic acid 6-phosphate etherase (295 aa).

Residues 53-216 (AIQRFNNGGR…STMTMIGVGK (164 aa)) form the SIS domain. The active-site Proton donor is E81. E112 is an active-site residue.

This sequence belongs to the GCKR-like family. MurNAc-6-P etherase subfamily. In terms of assembly, homodimer.

It catalyses the reaction N-acetyl-D-muramate 6-phosphate + H2O = N-acetyl-D-glucosamine 6-phosphate + (R)-lactate. Its pathway is amino-sugar metabolism; N-acetylmuramate degradation. Specifically catalyzes the cleavage of the D-lactyl ether substituent of MurNAc 6-phosphate, producing GlcNAc 6-phosphate and D-lactate. This Staphylococcus epidermidis (strain ATCC 35984 / DSM 28319 / BCRC 17069 / CCUG 31568 / BM 3577 / RP62A) protein is N-acetylmuramic acid 6-phosphate etherase.